The following is a 153-amino-acid chain: NADH dehydrogenase [ubiquinone] 1 beta subcomplex subunit 11, mitochondrial (153 aa).

A mitochondrion-targeting transit peptide spans 1–29 (MAAGLFGLSARRLLAAAATRGLPAARVRW). Positions 40-77 (PSAVAGKRPPEPTTQWQEDPEPEDENLYEKNPDSHGYD) are disordered. The span at 66-77 (LYEKNPDSHGYD) shows a compositional bias: basic and acidic residues. A helical transmembrane segment spans residues 89-109 (LVFFFGVSIILVLGSTFVAYL).

It belongs to the complex I NDUFB11 subunit family. As to quaternary structure, complex I is composed of 45 different subunits. Interacts with BCAP31.

Its subcellular location is the mitochondrion inner membrane. Functionally, accessory subunit of the mitochondrial membrane respiratory chain NADH dehydrogenase (Complex I), that is believed not to be involved in catalysis. Complex I functions in the transfer of electrons from NADH to the respiratory chain. The immediate electron acceptor for the enzyme is believed to be ubiquinone. This is NADH dehydrogenase [ubiquinone] 1 beta subcomplex subunit 11, mitochondrial (NDUFB11) from Gorilla gorilla gorilla (Western lowland gorilla).